The following is a 285-amino-acid chain: Acetylglutamate kinase (285 aa).

Substrate contacts are provided by residues 55-56 (GG), Arg77, and Asn171.

Belongs to the acetylglutamate kinase family. ArgB subfamily.

The protein resides in the cytoplasm. The catalysed reaction is N-acetyl-L-glutamate + ATP = N-acetyl-L-glutamyl 5-phosphate + ADP. Its pathway is amino-acid biosynthesis; L-arginine biosynthesis; N(2)-acetyl-L-ornithine from L-glutamate: step 2/4. In terms of biological role, catalyzes the ATP-dependent phosphorylation of N-acetyl-L-glutamate. This Chlorobaculum tepidum (strain ATCC 49652 / DSM 12025 / NBRC 103806 / TLS) (Chlorobium tepidum) protein is Acetylglutamate kinase.